A 233-amino-acid polypeptide reads, in one-letter code: Choline-phosphate cytidylyltransferase (233 aa).

CDP-choline-binding residues include Leu6, Ala8, Gly9, Tyr80, Ser85, and Ala101. Residue Asp102 coordinates Mg(2+). Position 187 (Tyr187) interacts with CDP-choline. Glu213 and Asp215 together coordinate Mg(2+).

The protein belongs to the LicC/PntC cytidylyltransferase family. The cofactor is Mg(2+).

It catalyses the reaction phosphocholine + CTP + H(+) = CDP-choline + diphosphate. It functions in the pathway lipopolysaccharide biosynthesis. Its function is as follows. Cytidylyltransferase involved in the biosynthesis of lipopolysaccharides (LPS), a necessary component and antigenic determinant of the outer membrane that has been shown to be an important factor in the host-parasite interaction in a number of Gram-negative species. Catalyzes the activation of phosphocholine (P-Cho) to CDP-choline (CDP-Cho). LicC is critical for the expression of the 6A2-specific epitope. In Haemophilus influenzae (strain ATCC 51907 / DSM 11121 / KW20 / Rd), this protein is Choline-phosphate cytidylyltransferase.